The primary structure comprises 156 residues: Transcription elongation factor GreA (156 aa).

Positions Met1–Arg32 form a coiled coil.

It belongs to the GreA/GreB family.

In terms of biological role, necessary for efficient RNA polymerase transcription elongation past template-encoded arresting sites. The arresting sites in DNA have the property of trapping a certain fraction of elongating RNA polymerases that pass through, resulting in locked ternary complexes. Cleavage of the nascent transcript by cleavage factors such as GreA or GreB allows the resumption of elongation from the new 3'terminus. GreA releases sequences of 2 to 3 nucleotides. The chain is Transcription elongation factor GreA from Thermotoga maritima (strain ATCC 43589 / DSM 3109 / JCM 10099 / NBRC 100826 / MSB8).